The sequence spans 74 residues: Protein krueppel (74 aa).

4 C2H2-type zinc fingers span residues 1–4, 10–32, 38–60, and 66–74; these read ERTH, FECPECHKRFTRDHHLKTHMRLH, YHCSHCDRQFVQVANLRRHLRVH, and YACELCAAK.

Belongs to the krueppel C2H2-type zinc-finger protein family.

The protein resides in the nucleus. In terms of biological role, krueppel is a gap class segmentation protein. This Apis mellifera (Honeybee) protein is Protein krueppel (Kr).